A 79-amino-acid chain; its full sequence is uncharacterized protein (79 aa).

2 helical membrane-spanning segments follow: residues 18–38 and 50–70; these read IWIINLKVIIKIIISEIIVLI and GITFVKNEFIISSIFYFFFLF.

It is found in the host membrane. This is an uncharacterized protein from Spiroplasma virus SpV1-R8A2 B (SpV1).